Here is a 192-residue protein sequence, read N- to C-terminus: Cytochrome c4 (192 aa).

Cytochrome c domains lie at 12 to 90 (GDPQ…ATQP) and 99 to 191 (ELAS…QGLS). 6 residues coordinate heme c: C25, C28, H29, C120, C123, and H124.

Post-translationally, binds 2 heme c groups covalently per subunit.

Its subcellular location is the periplasm. Diheme, high potential cytochrome c believed to be an intermediate electron donor in an anaerobic electron transport chain. This is Cytochrome c4 from Thiocapsa roseopersicina.